The sequence spans 376 residues: uncharacterized protein (376 aa).

This sequence belongs to the mimivirus R1 family.

This is an uncharacterized protein from Acanthamoeba polyphaga mimivirus (APMV).